We begin with the raw amino-acid sequence, 191 residues long: Cdc42 homolog (191 aa).

Position 10-17 (10-17 (GDGAVGKT)) interacts with GTP. The Effector region signature appears at 32–40 (YVPTVFDNY). Residues 57 to 61 (DTAGQ) and 115 to 118 (TQID) contribute to the GTP site. C188 is subject to Cysteine methyl ester. Residue C188 is the site of S-geranylgeranyl cysteine attachment. The propeptide at 189–191 (KFL) is removed in mature form.

It belongs to the small GTPase superfamily. Rho family. CDC42 subfamily.

Its subcellular location is the cell junction. It localises to the adherens junction. It is found in the cell membrane. It carries out the reaction GTP + H2O = GDP + phosphate + H(+). In terms of biological role, regulates mbt kinase activity and is also required to recruit mbt to adherens junctions. Together with mbt, regulates photoreceptor cell morphogenesis. This chain is Cdc42 homolog, found in Drosophila pseudoobscura pseudoobscura (Fruit fly).